Consider the following 432-residue polypeptide: Lipoyl synthase, mitochondrial (432 aa).

Over residues 32–68 (TLGATPGSTSTSTSTSTATTTTLESTSTSTSGDATET) the composition is skewed to low complexity. Residues 32–71 (TLGATPGSTSTSTSTSTATTTTLESTSTSTSGDATETTIK) are disordered. [4Fe-4S] cluster-binding residues include C150, C155, C161, C180, C184, C187, and S395. Residues 165–384 (KKSEATATIM…RDVALEMGFL (220 aa)) enclose the Radical SAM core domain.

Belongs to the radical SAM superfamily. Lipoyl synthase family. It depends on [4Fe-4S] cluster as a cofactor.

Its subcellular location is the mitochondrion. It carries out the reaction [[Fe-S] cluster scaffold protein carrying a second [4Fe-4S](2+) cluster] + N(6)-octanoyl-L-lysyl-[protein] + 2 oxidized [2Fe-2S]-[ferredoxin] + 2 S-adenosyl-L-methionine + 4 H(+) = [[Fe-S] cluster scaffold protein] + N(6)-[(R)-dihydrolipoyl]-L-lysyl-[protein] + 4 Fe(3+) + 2 hydrogen sulfide + 2 5'-deoxyadenosine + 2 L-methionine + 2 reduced [2Fe-2S]-[ferredoxin]. The protein operates within protein modification; protein lipoylation via endogenous pathway; protein N(6)-(lipoyl)lysine from octanoyl-[acyl-carrier-protein]: step 2/2. Functionally, catalyzes the radical-mediated insertion of two sulfur atoms into the C-6 and C-8 positions of the octanoyl moiety bound to the lipoyl domains of lipoate-dependent enzymes, thereby converting the octanoylated domains into lipoylated derivatives. This Lodderomyces elongisporus (strain ATCC 11503 / CBS 2605 / JCM 1781 / NBRC 1676 / NRRL YB-4239) (Yeast) protein is Lipoyl synthase, mitochondrial.